A 244-amino-acid chain; its full sequence is Capsid protein (244 aa).

Positions 1 to 24 (MSTSKRKRADEAQWNKRSTKKKGS) match the Bipartite nuclear localization signal motif. Positions 1–39 (MSTSKRKRADEAQWNKRSTKKKGSAPQAKKPGGKVEKPS) are disordered.

It belongs to the geminiviridae capsid protein family. Homomultimer. Interacts with the movement protein. Binds to single-stranded and double-stranded viral DNA.

It is found in the virion. Its subcellular location is the host nucleus. Encapsidates the viral genome into characteristic twinned ('geminate') particles. Binds the genomic viral ssDNA and shuttles it into and out of the cell nucleus. Plays a role in protection of the genome from degradation, virus acquisition and transmission by insect vectors, infectivity, and systemic movement. The CP of monopartite geminiviruses is absolutely essential for virus movement. The sequence is that of Capsid protein from Avena sativa (Oat).